We begin with the raw amino-acid sequence, 449 residues long: Deoxyguanosinetriphosphate triphosphohydrolase-like protein (449 aa).

The disordered stretch occupies residues 1 to 27 (MTSSVWQERRHGEDKQRRNDHRSPYQR). Positions 7–27 (QERRHGEDKQRRNDHRSPYQR) are enriched in basic and acidic residues. Residues 59–255 (RLTHSLEVSQ…MELADDIAYA (197 aa)) enclose the HD domain.

It belongs to the dGTPase family. Type 2 subfamily.

This is Deoxyguanosinetriphosphate triphosphohydrolase-like protein from Shewanella baltica (strain OS195).